The primary structure comprises 174 residues: Type II restriction enzyme Bsp6I (174 aa).

It catalyses the reaction Endonucleolytic cleavage of DNA to give specific double-stranded fragments with terminal 5'-phosphates.. Its function is as follows. A P subtype restriction enzyme that recognizes the double-stranded sequence 5'-GCNGC-3' and cleaves after C-2. The sequence is that of Type II restriction enzyme Bsp6I from Bacillus sp. (strain RFL6).